The sequence spans 430 residues: Histidine--tRNA ligase, chloroplastic (430 aa).

This sequence belongs to the class-II aminoacyl-tRNA synthetase family.

It is found in the plastid. Its subcellular location is the chloroplast. The enzyme catalyses tRNA(His) + L-histidine + ATP = L-histidyl-tRNA(His) + AMP + diphosphate + H(+). This is Histidine--tRNA ligase, chloroplastic (hisS) from Porphyra purpurea (Red seaweed).